A 146-amino-acid chain; its full sequence is UPF0178 protein Lin1493 (146 aa).

It belongs to the UPF0178 family.

This is UPF0178 protein Lin1493 from Listeria innocua serovar 6a (strain ATCC BAA-680 / CLIP 11262).